An 875-amino-acid chain; its full sequence is DNA mismatch repair protein MutS (875 aa).

626–633 (GPNMAGKS) is a binding site for ATP. The tract at residues 830–855 (RAAPPPPAPAAPKTSPVEERLREIQP) is disordered. The segment covering 845–855 (PVEERLREIQP) has biased composition (basic and acidic residues).

The protein belongs to the DNA mismatch repair MutS family.

In terms of biological role, this protein is involved in the repair of mismatches in DNA. It is possible that it carries out the mismatch recognition step. This protein has a weak ATPase activity. This chain is DNA mismatch repair protein MutS, found in Cereibacter sphaeroides (strain ATCC 17023 / DSM 158 / JCM 6121 / CCUG 31486 / LMG 2827 / NBRC 12203 / NCIMB 8253 / ATH 2.4.1.) (Rhodobacter sphaeroides).